A 398-amino-acid polypeptide reads, in one-letter code: Stabilizer of axonemal microtubules 2 (398 aa).

6 mn regions span residues 114–126, 148–162, 248–260, 282–296, 316–328, and 350–364; these read STTF…PQEI, ITSH…QLEL, NSTS…PYQA, KSIM…ESCR, LSTF…PHEL, and VTMY…RQEI.

It belongs to the FAM154 family.

The sequence is that of Stabilizer of axonemal microtubules 2 (SAXO2) from Homo sapiens (Human).